Here is a 224-residue protein sequence, read N- to C-terminus: Urease accessory protein UreF 2 (224 aa).

The protein belongs to the UreF family. In terms of assembly, ureD, UreF and UreG form a complex that acts as a GTP-hydrolysis-dependent molecular chaperone, activating the urease apoprotein by helping to assemble the nickel containing metallocenter of UreC. The UreE protein probably delivers the nickel.

It localises to the cytoplasm. Functionally, required for maturation of urease via the functional incorporation of the urease nickel metallocenter. In Pseudomonas syringae pv. tomato (strain ATCC BAA-871 / DC3000), this protein is Urease accessory protein UreF 2.